The sequence spans 915 residues: Protein translocase subunit SecA (915 aa).

ATP contacts are provided by residues Q87, 105-109, and D516; that span reads GEGKT. Positions 854–915 are disordered; it reads QKMQMRHEQL…KYKNCHGQLE (62 aa). Positions 899, 901, 910, and 911 each coordinate Zn(2+).

It belongs to the SecA family. Monomer and homodimer. Part of the essential Sec protein translocation apparatus which comprises SecA, SecYEG and auxiliary proteins SecDF-YajC and YidC. The cofactor is Zn(2+).

It is found in the cell inner membrane. Its subcellular location is the cytoplasm. The catalysed reaction is ATP + H2O + cellular proteinSide 1 = ADP + phosphate + cellular proteinSide 2.. In terms of biological role, part of the Sec protein translocase complex. Interacts with the SecYEG preprotein conducting channel. Has a central role in coupling the hydrolysis of ATP to the transfer of proteins into and across the cell membrane, serving both as a receptor for the preprotein-SecB complex and as an ATP-driven molecular motor driving the stepwise translocation of polypeptide chains across the membrane. In Cellvibrio japonicus (strain Ueda107) (Pseudomonas fluorescens subsp. cellulosa), this protein is Protein translocase subunit SecA.